The primary structure comprises 492 residues: Cholesteryl ester transfer protein (492 aa).

The first 17 residues, 1–17, serve as a signal peptide directing secretion; that stretch reads MLAVTLLSLALLGSTCA. Cys-160 and Cys-201 are oxidised to a cystine. An N-linked (GlcNAc...) asparagine glycan is attached at Asn-257.

Belongs to the BPI/LBP/Plunc superfamily. BPI/LBP family.

The protein localises to the secreted. It catalyses the reaction cholesteryl (9Z-octadecenoate)(in) = cholesteryl (9Z-octadecenoate)(out). The catalysed reaction is 1,2,3-tri-(9Z-octadecenoyl)-glycerol(in) = 1,2,3-tri-(9Z-octadecenoyl)-glycerol(out). The enzyme catalyses cholesteryl (9Z,12Z)-octadecadienoate(in) = cholesteryl (9Z,12Z)-octadecadienoate(out). Involved in the transfer of neutral lipids, including cholesteryl ester and triglyceride, among lipoprotein particles. Allows the net movement of cholesteryl ester from high density lipoproteins/HDL to triglyceride-rich very low density lipoproteins/VLDL, and the equimolar transport of triglyceride from VLDL to HDL. Regulates the reverse cholesterol transport, by which excess cholesterol is removed from peripheral tissues and returned to the liver for elimination. In Cricetulus griseus (Chinese hamster), this protein is Cholesteryl ester transfer protein.